The primary structure comprises 75 residues: Small ribosomal subunit protein bS18 (75 aa).

The protein belongs to the bacterial ribosomal protein bS18 family. As to quaternary structure, part of the 30S ribosomal subunit. Forms a tight heterodimer with protein bS6.

Binds as a heterodimer with protein bS6 to the central domain of the 16S rRNA, where it helps stabilize the platform of the 30S subunit. The protein is Small ribosomal subunit protein bS18 of Photobacterium profundum (strain SS9).